A 321-amino-acid polypeptide reads, in one-letter code: Tetraacyldisaccharide 4'-kinase (321 aa).

54-61 (SVGGTGKT) contacts ATP.

The protein belongs to the LpxK family.

It carries out the reaction a lipid A disaccharide + ATP = a lipid IVA + ADP + H(+). Its pathway is glycolipid biosynthesis; lipid IV(A) biosynthesis; lipid IV(A) from (3R)-3-hydroxytetradecanoyl-[acyl-carrier-protein] and UDP-N-acetyl-alpha-D-glucosamine: step 6/6. Functionally, transfers the gamma-phosphate of ATP to the 4'-position of a tetraacyldisaccharide 1-phosphate intermediate (termed DS-1-P) to form tetraacyldisaccharide 1,4'-bis-phosphate (lipid IVA). This chain is Tetraacyldisaccharide 4'-kinase, found in Rickettsia rickettsii.